Consider the following 481-residue polypeptide: MAQSAERPRPYAFMTANATRPVRTRFAPSPTGFLHLGGARTALFSWAFARHHQGVFVLRIEDTDVERSTPEAVQAILDSMDWLGMQPDEGPFYQMKRMDRYAEVLAGMLEAGTAYHCYCSPEEVDAMREAARAKGLKPRYDGTWRPEPGKTLPPVPADRKPVIRFRNPIDGATSWNDMVKGPISFDNGELDDLIIARPDGTPTYNFCVVVDDWDMGITHVLRGDDHVNNTPRQINILRALGATLPEYGHVPMILGPDGEKLSKRHGAVNVMEYDAQGYLPEAMINYLARLGWSHGDDELFTREQLVEWFDTRHLSKSASQWDPKKLNWVNAHYIKGMDDAELAGRVAPRVERRGGKPQAADLPAIMGLLKDRAETLEQLAEDAMLFCGEYQPAPAELAAQHLTETARAALADFAARARDTEWNRAAISALIKAVLADRGLKMPQLGIPLRVAVTGRAQTPAVDAVLELLGKETVLARLQAL.

Residues 28-38 (PSPTGFLHLGG) carry the 'HIGH' region motif. Basic and acidic residues predominate over residues 139–148 (RYDGTWRPEP). The tract at residues 139-159 (RYDGTWRPEPGKTLPPVPADR) is disordered. The short motif at 260–264 (KLSKR) is the 'KMSKS' region element. An ATP-binding site is contributed by Lys263.

This sequence belongs to the class-I aminoacyl-tRNA synthetase family. Glutamate--tRNA ligase type 1 subfamily. In terms of assembly, monomer.

Its subcellular location is the cytoplasm. The enzyme catalyses tRNA(Glu) + L-glutamate + ATP = L-glutamyl-tRNA(Glu) + AMP + diphosphate. In terms of biological role, catalyzes the attachment of glutamate to tRNA(Glu) in a two-step reaction: glutamate is first activated by ATP to form Glu-AMP and then transferred to the acceptor end of tRNA(Glu). The protein is Glutamate--tRNA ligase of Bordetella parapertussis (strain 12822 / ATCC BAA-587 / NCTC 13253).